The sequence spans 212 residues: Ion-translocating oxidoreductase complex subunit G (212 aa).

Residues 9–29 (GLLLALFALLCTGLVAVVNQQ) form a helical membrane-spanning segment. Thr-176 carries the FMN phosphoryl threonine modification.

This sequence belongs to the RnfG family. As to quaternary structure, the complex is composed of six subunits: RnfA, RnfB, RnfC, RnfD, RnfE and RnfG. It depends on FMN as a cofactor.

The protein resides in the cell inner membrane. Part of a membrane-bound complex that couples electron transfer with translocation of ions across the membrane. This chain is Ion-translocating oxidoreductase complex subunit G, found in Shewanella oneidensis (strain ATCC 700550 / JCM 31522 / CIP 106686 / LMG 19005 / NCIMB 14063 / MR-1).